Consider the following 188-residue polypeptide: Elongation factor P (188 aa).

Belongs to the elongation factor P family.

Its subcellular location is the cytoplasm. It participates in protein biosynthesis; polypeptide chain elongation. Functionally, involved in peptide bond synthesis. Stimulates efficient translation and peptide-bond synthesis on native or reconstituted 70S ribosomes in vitro. Probably functions indirectly by altering the affinity of the ribosome for aminoacyl-tRNA, thus increasing their reactivity as acceptors for peptidyl transferase. In Gemmatimonas aurantiaca (strain DSM 14586 / JCM 11422 / NBRC 100505 / T-27), this protein is Elongation factor P.